Consider the following 345-residue polypeptide: Ubiquinone biosynthesis O-methyltransferase, mitochondrial (345 aa).

The N-terminal 86 residues, 1–86, are a transit peptide targeting the mitochondrion; that stretch reads MWRGGRLSSR…TYRSSWKKLY (86 aa). S-adenosyl-L-methionine is bound at residue R124. Residues K143 and K149 each carry the N6-acetyllysine modification. Residues G154 and D175 each coordinate S-adenosyl-L-methionine. K196 bears the N6-acetyllysine mark. Residue S222 coordinates S-adenosyl-L-methionine. Mg(2+) is bound by residues E223, E226, and H227.

The protein belongs to the class I-like SAM-binding methyltransferase superfamily. UbiG/COQ3 family. As to quaternary structure, component of a multi-subunit COQ enzyme complex, composed of at least COQ3, COQ4, COQ5, COQ6, COQ7 and COQ9. The cofactor is Mg(2+).

The protein localises to the mitochondrion inner membrane. The enzyme catalyses 3,4-dihydroxy-5-(all-trans-decaprenyl)benzoate + S-adenosyl-L-methionine = 4-hydroxy-3-methoxy-5-(all-trans-decaprenyl)benzoate + S-adenosyl-L-homocysteine + H(+). It carries out the reaction a 3-demethylubiquinone + S-adenosyl-L-methionine = a ubiquinone + S-adenosyl-L-homocysteine. It catalyses the reaction 3-demethylubiquinol-10 + S-adenosyl-L-methionine = ubiquinol-10 + S-adenosyl-L-homocysteine + H(+). The protein operates within cofactor biosynthesis; ubiquinone biosynthesis. In terms of biological role, O-methyltransferase required for two non-consecutive steps during ubiquinone biosynthesis. Catalyzes the 2 O-methylation of 3,4-dihydroxy-5-(all-trans-decaprenyl)benzoic acid into 4-hydroxy-3-methoxy-5-(all-trans-decaprenyl)benzoic acid. Also catalyzes the last step of ubiquinone biosynthesis by mediating methylation of 3-demethylubiquinone into ubiquinone. Also able to mediate the methylation of 3-demethylubiquinol-10 into ubiquinol-10. The polypeptide is Ubiquinone biosynthesis O-methyltransferase, mitochondrial (Rattus norvegicus (Rat)).